The following is a 474-amino-acid chain: Phenylalanine--tRNA ligase alpha subunit (474 aa).

L-phenylalanine contacts are provided by residues threonine 317, 356–358 (QLE), and tyrosine 396. Glutamate 398 is a Mg(2+) binding site. Position 421 (phenylalanine 421) interacts with L-phenylalanine.

The protein belongs to the class-II aminoacyl-tRNA synthetase family. Phe-tRNA synthetase alpha subunit type 2 subfamily. As to quaternary structure, tetramer of two alpha and two beta subunits. Mg(2+) is required as a cofactor.

It localises to the cytoplasm. It carries out the reaction tRNA(Phe) + L-phenylalanine + ATP = L-phenylalanyl-tRNA(Phe) + AMP + diphosphate + H(+). The polypeptide is Phenylalanine--tRNA ligase alpha subunit (Archaeoglobus fulgidus (strain ATCC 49558 / DSM 4304 / JCM 9628 / NBRC 100126 / VC-16)).